We begin with the raw amino-acid sequence, 295 residues long: Glutamyl-Q tRNA(Asp) synthetase (295 aa).

Residues 5–9 (RFAPS) and Glu41 each bind L-glutamate. The 'HIGH' region motif lies at 8–18 (PSPTGLLHIGS). The Zn(2+) site is built by Cys97, Cys99, Tyr117, and Cys121. Tyr178 and Arg196 together coordinate L-glutamate. Positions 234–238 (KWSKQ) match the 'KMSKS' region motif. Residue Lys237 coordinates ATP.

It belongs to the class-I aminoacyl-tRNA synthetase family. GluQ subfamily. Zn(2+) serves as cofactor.

Functionally, catalyzes the tRNA-independent activation of glutamate in presence of ATP and the subsequent transfer of glutamate onto a tRNA(Asp). Glutamate is transferred on the 2-amino-5-(4,5-dihydroxy-2-cyclopenten-1-yl) moiety of the queuosine in the wobble position of the QUC anticodon. The protein is Glutamyl-Q tRNA(Asp) synthetase of Neisseria gonorrhoeae (strain ATCC 700825 / FA 1090).